Reading from the N-terminus, the 365-residue chain is TD and POZ domain-containing protein 3 (365 aa).

One can recognise an MATH domain in the interval 19–149 (KFCYNWTISN…EDQFTICCKV (131 aa)). Residues 188–250 (TDCCLLVAGH…EMMGFIYTGK (63 aa)) enclose the BTB domain.

It belongs to the Tdpoz family.

This chain is TD and POZ domain-containing protein 3, found in Mus musculus (Mouse).